A 788-amino-acid chain; its full sequence is Leucine-rich repeat and fibronectin type-III domain-containing protein 2 (788 aa).

The signal sequence occupies residues 1 to 20 (METLLGGLLAFGMAFAVVDA). An LRRNT domain is found at 21 to 52 (CPKYCVCQNLSESLGTLCPSKGLLFVPPDIDR). Residues 21-534 (CPKYCVCQNL…MHSQILGGTM (514 aa)) are Extracellular-facing. N-linked (GlcNAc...) asparagine glycans are attached at residues N29 and N74. LRR repeat units lie at residues 53–74 (RTVELRLGGNFIIHIGRQDFAN), 77–98 (GLVDLTLSRNTISHIQPFSFLD), 101–122 (SLRSLHLDSNRLPSLGEDTLRG), 125–146 (NLQHLIVNNNQLGGIADDAFED), 150–171 (TLEDLDLSYNNLHGLPWDSVRR), 174–195 (NLHQLSLDHNLLDHIAEGTFAD), and 198–219 (KLARLDLTSNRLQKLPPDPIFA). The LRRCT domain maps to 242–288 (NPLHCNCELLWLRRLERDDDLKTCGSPGGLKGRYFWHIREEEFVCEP). Positions 289–375 (PLITQHTHKL…GEATATVEVS (87 aa)) constitute an Ig-like domain. C310 and C359 are joined by a disulfide. N-linked (GlcNAc...) asparagine glycosylation is found at N332, N341, N384, and N457. The segment at 383-423 (SNSTSRMAPPKSRLSDITGSSKTSRGGGGSGAGEPPKSTPE) is disordered. In terms of domain architecture, Fibronectin type-III spans 422–518 (PERAVLVSDV…GCAQFFTKAD (97 aa)). The helical transmembrane segment at 535-555 (ILVIGGIIVATLLVFIVILMV) threads the bilayer. Residues 556–788 (RYKVCNHDAP…SSEWVMESTV (233 aa)) are Cytoplasmic-facing. Residues 620 to 641 (CDSSSSSSLGSGEAAGLSRGPW) are compositionally biased toward low complexity. Disordered stretches follow at residues 620-655 (CDSSSSSSLGSGEAAGLSRGPWRLPPPAPRPKPSLD) and 668-707 (SQRKEELLDSRTPAGRGAGTSARGHHSDREPLLGPPATRA). Residues 642 to 651 (RLPPPAPRPK) show a composition bias toward pro residues. The PDZ-binding signature appears at 785 to 788 (ESTV).

Belongs to the LRFN family. As to quaternary structure, forms heteromeric complexes with LRFN1, LRFN3 and LRFN4. Can form homomeric complexes, but not across cell junctions. Can form heteromeric complexes with LRFN5. Interacts with DLG1, DLG3 and DLG4; interaction with DLG4 is mediated by the PDZ-binding domain. Also interacts with DLG2. Interacts with 2 NMDA receptor subunits GRIN1 and GRIN2A.

The protein resides in the membrane. The protein localises to the synapse. It is found in the postsynaptic cell membrane. Promotes neurite outgrowth in hippocampal neurons. Enhances the cell surface expression of GRIN1 and GRIN2A NMDA receptor subunits. May play a role in redistributing DLG4 to the cell periphery. This Rattus norvegicus (Rat) protein is Leucine-rich repeat and fibronectin type-III domain-containing protein 2 (Lrfn2).